A 181-amino-acid polypeptide reads, in one-letter code: Protein csk22 (181 aa).

5 consecutive transmembrane segments (helical) span residues leucine 5–isoleucine 22, tryptophan 35–histidine 57, tyrosine 61–alanine 78, isoleucine 91–tyrosine 113, and leucine 140–leucine 162.

Its subcellular location is the cell membrane. This Bacillus subtilis (strain 168) protein is Protein csk22 (csk22).